The sequence spans 339 residues: Geranylgeranyl transferase type-2 subunit beta (339 aa).

Thr11 is subject to Phosphothreonine. 6 PFTB repeats span residues 28-69 (LEKH…DLMG), 76-117 (REEI…TLYD), 124-165 (VDKV…ALLG), 172-213 (VEKA…AITS), 220-261 (SDLL…KIIG), and 268-310 (REKL…SLLG). Geranylgeranyl diphosphate contacts are provided by residues 198–200 (HAG) and 240–243 (RPEK). 2 residues coordinate Zn(2+): Asp246 and Cys248. Residues Tyr249 and 249–252 (YSWW) contribute to the geranylgeranyl diphosphate site. His298 serves as a coordination point for Zn(2+).

The protein belongs to the protein prenyltransferase subunit beta family. As to quaternary structure, heterotrimer composed of RABGGTA, RABGGTB and CHM; within this trimer, RABGGTA and RABGGTB form the catalytic component B, while CHM (component A) mediates peptide substrate binding. The Rab GGTase dimer (RGGT) interacts with CHM (component A) prior to Rab protein binding; the association is stabilized by geranylgeranyl pyrophosphate (GGpp). The CHM:RGGT:Rab complex is destabilized by GGpp. Interaction of RABGGTB with prenylated PTP4A2 precludes its association with RABGGTA and inhibits enzyme activity. Interacts with CHODL. Interacts with non-phosphorylated form of RAB8A; phosphorylation of RAB8A at 'Thr-72' disrupts this interaction. Zn(2+) serves as cofactor. Ubiquitous. Detected in all the major organs in adult animals.

It catalyses the reaction geranylgeranyl diphosphate + L-cysteinyl-[protein] = S-geranylgeranyl-L-cysteinyl-[protein] + diphosphate. Its activity is regulated as follows. The enzymatic reaction requires the aid of a Rab escort protein (also called component A), such as CHM. Functionally, catalyzes the transfer of a geranylgeranyl moiety from geranylgeranyl diphosphate to both cysteines of Rab proteins with the C-terminal sequence -XXCC, -XCXC and -CCXX, such as RAB1A, RAB3A, RAB5A and RAB7A. This chain is Geranylgeranyl transferase type-2 subunit beta (Rabggtb), found in Mus musculus (Mouse).